A 2291-amino-acid chain; its full sequence is Spectrin beta chain (2291 aa).

Residues 1–271 (MTTDISIVRW…IITYVVTYYH (271 aa)) are actin-binding. Calponin-homology (CH) domains follow at residues 50–154 (SVQK…LRFQ) and 169–274 (KSAK…HYFS). Spectrin repeat units lie at residues 300–408 (VHDY…ALRE), 420–521 (AARF…MRLE), 525–633 (QLQQ…RLEE), 636–739 (KLWQ…RLEN), 743–843 (YFQL…QRLL), 848–948 (LYKL…MDDL), 954–1057 (VQTF…KLEE), 1060–1166 (DLHR…VLLS), 1170–1272 (DQQL…EKLK), 1276–1376 (KLHE…GAML), 1386–1484 (QQTC…KALE), 1488–1591 (EAFQ…HLLE), 1594–1697 (KVQQ…RLNE), 1701–1802 (LFML…TQML), 1807–1909 (ELHK…QKLA), 1913–2015 (DLFR…ENLQ), and 2020–2089 (VYQF…KEMK). The segment covering 2097–2140 (EAERQRIKEEQEAKAASEAAEQAKREAERRDDVDVGASHDDSER) has biased composition (basic and acidic residues). Residues 2097–2152 (EAERQRIKEEQEAKAASEAAEQAKREAERRDDVDVGASHDDSERGGTPGAGEGHEG) are disordered. The region spanning 2147-2259 (GEGHEGYVTR…WVTSLKAQSD (113 aa)) is the PH domain. Ser2195 is subject to Phosphoserine. Residues 2262-2275 (AVAASRSQTLPATS) are compositionally biased toward polar residues. The interval 2262–2291 (AVAASRSQTLPATSQKDEPKRRSFFTLKKK) is disordered.

It belongs to the spectrin family. In terms of assembly, native spectrin molecule is a tetramer composed of two antiparallel heterodimers joined head to head so that each end of the native molecule includes the C-terminus of the alpha subunit and the N-terminus of the beta subunit.

The protein localises to the cytoplasm. Its subcellular location is the cytoskeleton. The protein resides in the cell cortex. Its function is as follows. Spectrin is the major constituent of the cytoskeletal network underlying the erythrocyte plasma membrane. It associates with band 4.1 and actin to form the cytoskeletal superstructure of the erythrocyte plasma membrane. Interacts with calmodulin in a calcium-dependent manner. This is Spectrin beta chain (beta-Spec) from Drosophila melanogaster (Fruit fly).